The chain runs to 631 residues: Phosphomethylpyrimidine synthase (631 aa).

Residues N239, M268, Y297, H333, 353-355 (SRG), 394-397 (DGLR), and E433 each bind substrate. H437 contacts Zn(2+). Y460 is a binding site for substrate. Residue H501 coordinates Zn(2+). Residues C581, C584, and C589 each contribute to the [4Fe-4S] cluster site.

The protein belongs to the ThiC family. Homodimer. The cofactor is [4Fe-4S] cluster.

The enzyme catalyses 5-amino-1-(5-phospho-beta-D-ribosyl)imidazole + S-adenosyl-L-methionine = 4-amino-2-methyl-5-(phosphooxymethyl)pyrimidine + CO + 5'-deoxyadenosine + formate + L-methionine + 3 H(+). It functions in the pathway cofactor biosynthesis; thiamine diphosphate biosynthesis. Functionally, catalyzes the synthesis of the hydroxymethylpyrimidine phosphate (HMP-P) moiety of thiamine from aminoimidazole ribotide (AIR) in a radical S-adenosyl-L-methionine (SAM)-dependent reaction. The sequence is that of Phosphomethylpyrimidine synthase from Salmonella agona (strain SL483).